Reading from the N-terminus, the 1043-residue chain is Glutamate receptor ionotropic, NMDA 3B (1043 aa).

The signal sequence occupies residues 1 to 22 (MEFVRALWLGLALALGPGSAGG). Over 23–574 (HPQPCGVLAR…PIGAFMWPLH (552 aa)) the chain is Extracellular. N-linked (GlcNAc...) asparagine glycosylation is found at Asn-69, Asn-344, Asn-451, and Asn-465. Intrachain disulfides connect Cys-439-Cys-475 and Cys-445-Cys-476. Ser-531, Ser-533, and Arg-538 together coordinate glycine. Positions 533 and 538 each coordinate D-serine. Residues 575 to 594 (WSTWLGVFAALHLTALFLTV) traverse the membrane as a helical segment. Topologically, residues 595–615 (YEWRSPYGLTPRGRNRSTVFS) are cytoplasmic. The segment at residues 616-627 (YSSALNLCYAIL) is an intramembrane region (discontinuously helical). The Cytoplasmic portion of the chain corresponds to 628 to 641 (FRRTVSSKTPKCPT). The helical transmembrane segment at 642-661 (GRLLMNLWAIFCLLVLSSYT) threads the bilayer. The Extracellular segment spans residues 662–832 (ANLAAVMVGD…TLQMSIYHFA (171 aa)). Residue Ser-701 coordinates glycine. Positions 701, 702, and 745 each coordinate D-serine. Asp-745 provides a ligand contact to glycine. N-linked (GlcNAc...) asparagine glycosylation occurs at Asn-786. The helical transmembrane segment at 833-848 (GLFVLLCLGLGSALLS) threads the bilayer. Residues 849 to 1043 (SLGEHAFFRL…PHSGRPGSQE (195 aa)) are Cytoplasmic-facing. Disordered regions lie at residues 882–924 (ALNT…WKRA) and 1012–1043 (GDSA…GSQE). The segment at 979–1012 (QPGELQELERRIEVARERLRQALVRRGQLLAQLG) is involved in the trafficking and surface expression of NMDARs. Low complexity predominate over residues 1024–1035 (QARAAPAEAPPH).

Belongs to the glutamate-gated ion channel (TC 1.A.10.1) family. NR3B/GRIN3B subfamily. Forms heterotetrameric channels that contain at least two GluN1 subunits and at least a combination of one GluN2 and one GluN3 subunits (in vitro). Forms heterotetrameric channels composed of two GluN1/zeta subunits (GRIN1), and two identical GluN3 subunits (GRIN3A or GRIN3B) (in vitro). Does not form functional homomeric channels.

The protein resides in the cell membrane. It localises to the postsynaptic cell membrane. The catalysed reaction is Ca(2+)(in) = Ca(2+)(out). It carries out the reaction Na(+)(in) = Na(+)(out). Its function is as follows. Component of a non-conventional N-methyl-D-aspartate (NMDA) receptors (NMDARs) that function as heterotetrameric, ligand-gated cation channels with low calcium permeability and low voltage-dependent block by Mg(2+). Forms glutamatergic receptor complexes with GluN1 and GluN2 subunits which are activated by glycine binding to the GluN1 and GluN3 subunits and L-glutamate binding to GluN2 subunits. Forms excitatory glycinergic receptor complexes with GluN1 alone which are activated by glycine binding to the GluN1 and GluN3 subunits. GluN3B subunit also binds D-serine and, in the absence of glycine, activates glycinergic receptor complexes, but with lower efficacy than glycine. Each GluN3 subunit confers differential attributes to channel properties, including activation, deactivation and desensitization kinetics, pH sensitivity, Ca2(+) permeability, and binding to allosteric modulators. The protein is Glutamate receptor ionotropic, NMDA 3B of Homo sapiens (Human).